The following is a 446-amino-acid chain: C4-dicarboxylate transport protein (446 aa).

The next 9 membrane-spanning stretches (helical) occupy residues 25 to 45 (VQVL…PAIG), 58 to 78 (LVKM…IASI), 93 to 113 (FAYF…VANV), 159 to 179 (ALTE…GLAL), 199 to 219 (VFFG…FGAM), 236 to 256 (LLIA…LGAV), 322 to 342 (IYMT…LSLG), 370 to 390 (AATL…ILGI), and 400 to 420 (LTNF…EKGL).

Belongs to the dicarboxylate/amino acid:cation symporter (DAACS) (TC 2.A.23) family.

The protein resides in the cell inner membrane. Functionally, responsible for the transport of dicarboxylates such as succinate, fumarate, and malate from the periplasm across the membrane. The protein is C4-dicarboxylate transport protein of Sphingopyxis alaskensis (strain DSM 13593 / LMG 18877 / RB2256) (Sphingomonas alaskensis).